Here is a 365-residue protein sequence, read N- to C-terminus: Histidinol-phosphate aminotransferase (365 aa).

Position 221 is an N6-(pyridoxal phosphate)lysine (K221).

This sequence belongs to the class-II pyridoxal-phosphate-dependent aminotransferase family. Histidinol-phosphate aminotransferase subfamily. As to quaternary structure, homodimer. It depends on pyridoxal 5'-phosphate as a cofactor.

The enzyme catalyses L-histidinol phosphate + 2-oxoglutarate = 3-(imidazol-4-yl)-2-oxopropyl phosphate + L-glutamate. The protein operates within amino-acid biosynthesis; L-histidine biosynthesis; L-histidine from 5-phospho-alpha-D-ribose 1-diphosphate: step 7/9. This chain is Histidinol-phosphate aminotransferase, found in Nitrobacter hamburgensis (strain DSM 10229 / NCIMB 13809 / X14).